Here is a 502-residue protein sequence, read N- to C-terminus: Lysine--tRNA ligase (502 aa).

2 residues coordinate Mg(2+): Glu413 and Glu420.

It belongs to the class-II aminoacyl-tRNA synthetase family. In terms of assembly, homodimer. Mg(2+) is required as a cofactor.

The protein resides in the cytoplasm. The catalysed reaction is tRNA(Lys) + L-lysine + ATP = L-lysyl-tRNA(Lys) + AMP + diphosphate. In Haemophilus influenzae (strain ATCC 51907 / DSM 11121 / KW20 / Rd), this protein is Lysine--tRNA ligase (lysS).